The following is a 541-amino-acid chain: Formimidoyltransferase-cyclodeaminase (541 aa).

Residues 1–181 (MAKLVECVPN…GATVTGARTF (181 aa)) are formiminotransferase N-subdomain. The For formimidoyltransferase activity role is filled by His-82. 163-172 (GPPAFVPQWG) is a binding site for folate. A formiminotransferase C-subdomain region spans residues 182–326 (LIAYNINLLC…PRERIIEYLV (145 aa)). The interval 327–334 (QAGQEDKG) is linker. The segment at 335–541 (LVTKPLGAFV…VLALLEKREA (207 aa)) is cyclodeaminase/cyclohydrolase. Catalysis depends on Asp-412, which acts as the For cyclodeaminase activity.

The protein in the C-terminal section; belongs to the cyclodeaminase/cyclohydrolase family. It in the N-terminal section; belongs to the formiminotransferase family. Homooctamer, including four polyglutamate binding sites. The subunits are arranged as a tetramer of dimers, and form a planar ring-shaped structure.

The protein resides in the cytoplasm. Its subcellular location is the cytosol. It is found in the golgi apparatus. It localises to the cytoskeleton. The protein localises to the microtubule organizing center. The protein resides in the centrosome. Its subcellular location is the centriole. It carries out the reaction 5-formimidoyltetrahydrofolate + L-glutamate = N-formimidoyl-L-glutamate + (6S)-5,6,7,8-tetrahydrofolate. It catalyses the reaction 5-formimidoyltetrahydrofolate + 2 H(+) = (6R)-5,10-methenyltetrahydrofolate + NH4(+). It functions in the pathway amino-acid degradation; L-histidine degradation into L-glutamate; L-glutamate from N-formimidoyl-L-glutamate (transferase route): step 1/1. Folate-dependent enzyme, that displays both transferase and deaminase activity. Serves to channel one-carbon units from formiminoglutamate to the folate pool. In terms of biological role, binds and promotes bundling of vimentin filaments originating from the Golgi. The chain is Formimidoyltransferase-cyclodeaminase (FTCD) from Gallus gallus (Chicken).